A 73-amino-acid polypeptide reads, in one-letter code: UPF0352 protein HD_1515 (73 aa).

The protein belongs to the UPF0352 family.

This chain is UPF0352 protein HD_1515, found in Haemophilus ducreyi (strain 35000HP / ATCC 700724).